A 335-amino-acid polypeptide reads, in one-letter code: MNTEATHDQNEALTTGARLRNAREQLGLSQQAVAERLCLKVSTVRDIEEDKAPADLASTFLRGYIRSYARLVHIPEEELLPGLEKQAPLRAAKVAPVQSFSLGKRRKKRDGWLMTFTWLVLFVVIGLSGAWWWQDHKAQQEEITTMADQSSAELNNNQSQSVPLDTSTTTDQAMATTPTSPVDTTATNTQTPAVTAPAPAVDPQQNAVVPPSQANVDTAATPAPAATTTPDGAAPLPTDQAGVTTPAVDPNALVMNFTADCWLEVTDATGKKLFSGMQRKDGNLNLTGQAPYKLKIGAPAAVQIQYQGKPVDLSRFIRTNQVARLTLNAEQSPAQ.

Topologically, residues 1 to 111 (MNTEATHDQN…LGKRRKKRDG (111 aa)) are cytoplasmic. One can recognise an HTH cro/C1-type domain in the interval 19-71 (LRNAREQLGLSQQAVAERLCLKVSTVRDIEEDKAPADLASTFLRGYIRSYARL). Positions 30–49 (QQAVAERLCLKVSTVRDIEE) form a DNA-binding region, H-T-H motif. Residues 112 to 132 (WLMTFTWLVLFVVIGLSGAWW) traverse the membrane as a helical; Signal-anchor for type II membrane protein segment. Residues 133 to 335 (WQDHKAQQEE…TLNAEQSPAQ (203 aa)) lie on the Periplasmic side of the membrane. The segment covering 148–164 (DQSSAELNNNQSQSVPL) has biased composition (polar residues). A disordered region spans residues 148-244 (DQSSAELNNN…PLPTDQAGVT (97 aa)). Low complexity-rich tracts occupy residues 165–205 (DTST…DPQQ) and 217–239 (DTAA…LPTD).

The protein belongs to the RodZ family.

The protein resides in the cell inner membrane. Functionally, cytoskeletal protein that is involved in cell-shape control through regulation of the length of the long axis. The polypeptide is Cytoskeleton protein RodZ (Escherichia coli O6:H1 (strain CFT073 / ATCC 700928 / UPEC)).